We begin with the raw amino-acid sequence, 351 residues long: Bifunctional UDP-glucose 4-epimerase and UDP-xylose 4-epimerase 3 (351 aa).

NAD(+) is bound at residue 8 to 39; that stretch reads NILVTGGAGFIGTHTVVQLLNQGFKVTIIDNL. Substrate is bound at residue S134. Y158 serves as the catalytic Proton acceptor.

It belongs to the NAD(P)-dependent epimerase/dehydratase family. Homodimer. Heterodimer. Requires NAD(+) as cofactor. Ubiquitous.

The enzyme catalyses UDP-alpha-D-glucose = UDP-alpha-D-galactose. The catalysed reaction is UDP-beta-L-arabinopyranose = UDP-alpha-D-xylose. It functions in the pathway carbohydrate metabolism; galactose metabolism. Its pathway is nucleotide-sugar biosynthesis; UDP-L-arabinose biosynthesis; UDP-L-arabinose from UDP-alpha-D-xylose: step 1/1. It participates in cell wall biogenesis; cell wall polysaccharide biosynthesis. Strongly inhibited by UDP. In terms of biological role, catalyzes the interconversion between UDP-glucose and UDP-galactose and the interconversion between UDP-arabinose and UDP-xylose. Cooperates with UGE2 in pollen development. May preferentially act in the UDP-galactose to UDP-glucose direction, therefore displaying a role in carbohydrate catabolism. The chain is Bifunctional UDP-glucose 4-epimerase and UDP-xylose 4-epimerase 3 (UGE3) from Arabidopsis thaliana (Mouse-ear cress).